Consider the following 359-residue polypeptide: DNA polymerase IV (359 aa).

The UmuC domain maps to 4 to 185 (IIHIDMDCYF…LSLRKIPGVG (182 aa)). Residues D8 and D103 each contribute to the Mg(2+) site. E104 is an active-site residue.

Belongs to the DNA polymerase type-Y family. In terms of assembly, monomer. Mg(2+) serves as cofactor.

It localises to the cytoplasm. It carries out the reaction DNA(n) + a 2'-deoxyribonucleoside 5'-triphosphate = DNA(n+1) + diphosphate. In terms of biological role, poorly processive, error-prone DNA polymerase involved in untargeted mutagenesis. Copies undamaged DNA at stalled replication forks, which arise in vivo from mismatched or misaligned primer ends. These misaligned primers can be extended by PolIV. Exhibits no 3'-5' exonuclease (proofreading) activity. May be involved in translesional synthesis, in conjunction with the beta clamp from PolIII. The polypeptide is DNA polymerase IV (Shewanella sp. (strain ANA-3)).